The sequence spans 624 residues: Aliphatic sulfonate oxidoreductase, WOR-like subunit (624 aa).

8 residues coordinate tungstopterin: Lys-77, Ser-93, Val-94, Ser-96, His-195, Ala-196, Gly-198, and Tyr-199. [4Fe-4S] cluster-binding residues include Asp-299, Cys-302, and Cys-306. Positions 353, 357, 358, 359, 470, 490, 494, 495, and 496 each coordinate tungstopterin. Position 495 (Cys-495) interacts with [4Fe-4S] cluster. Positions 552 to 575 (KDDDNPPRFYEPLPSGPVKGKAPN) are disordered.

The protein belongs to the AOR/FOR family. As to quaternary structure, heterodimer composed of a small WOR5-S subunit, with four [4Fe-4S] clusters, and a large WOR5-L subunit, containing the active site tungsto-bispyranopterin cofactor as well as another [4Fe-4S] cluster. [4Fe-4S] cluster is required as a cofactor. The cofactor is tungstopterin.

It localises to the cytoplasm. The enzyme catalyses an aliphatic sulfonate + 4 oxidized [4Fe-4S]-[ferredoxin] + 2 H2O = 4 reduced [4Fe-4S]-[ferredoxin] + a carboxylate + sulfite + 6 H(+). It carries out the reaction an aliphatic sulfonate + 2 oxidized [4Fe-4S]-[ferredoxin] + H2O = 2 reduced [4Fe-4S]-[ferredoxin] + an aldehyde + sulfite + 3 H(+). It catalyses the reaction 2 oxidized [4Fe-4S]-[ferredoxin] + an aldehyde + H2O = 2 reduced [4Fe-4S]-[ferredoxin] + a carboxylate + 3 H(+). The catalysed reaction is 4 oxidized [4Fe-4S]-[ferredoxin] + taurine + 2 H2O = 4 reduced [4Fe-4S]-[ferredoxin] + sulfite + glycine + 6 H(+). The enzyme catalyses 2 oxidized [4Fe-4S]-[ferredoxin] + taurine + H2O = aminoacetaldehyde + 2 reduced [4Fe-4S]-[ferredoxin] + sulfite + 3 H(+). It carries out the reaction aminoacetaldehyde + 2 oxidized [4Fe-4S]-[ferredoxin] + H2O = 2 reduced [4Fe-4S]-[ferredoxin] + glycine + 3 H(+). In terms of biological role, WOR-like catalytic subunit of an oxidoreductase that can desulfonate and oxidize aliphatic sulfonates such as taurine. The activity involves two steps: an oxidative desulfonation reaction, followed by the activation of a second water molecule and oxidation of the resulting aldehyde. May be involved in the oxidation of various aliphatic sulfonates and also phosphonates. In vitro, has a broad substrate specificity with a high affinity for several substituted and nonsubstituted aliphatic and aromatic aldehydes with various chain lengths, with methyl viologen or benzyl viologen as electron acceptor. Ferredoxin is the physiological electron acceptor. The protein is Aliphatic sulfonate oxidoreductase, WOR-like subunit of Pyrococcus furiosus (strain ATCC 43587 / DSM 3638 / JCM 8422 / Vc1).